The following is a 270-amino-acid chain: 4-hydroxy-tetrahydrodipicolinate reductase (270 aa).

NAD(+) is bound by residues Gly9 to Met14 and Glu35. Arg36 provides a ligand contact to NADP(+). NAD(+)-binding positions include Gly99–Thr101 and Ala123–Phe126. Residue His156 is the Proton donor/acceptor of the active site. His157 serves as a coordination point for (S)-2,3,4,5-tetrahydrodipicolinate. Lys160 (proton donor) is an active-site residue. Residue Gly166–Thr167 coordinates (S)-2,3,4,5-tetrahydrodipicolinate.

The protein belongs to the DapB family.

It is found in the cytoplasm. It catalyses the reaction (S)-2,3,4,5-tetrahydrodipicolinate + NAD(+) + H2O = (2S,4S)-4-hydroxy-2,3,4,5-tetrahydrodipicolinate + NADH + H(+). It carries out the reaction (S)-2,3,4,5-tetrahydrodipicolinate + NADP(+) + H2O = (2S,4S)-4-hydroxy-2,3,4,5-tetrahydrodipicolinate + NADPH + H(+). The protein operates within amino-acid biosynthesis; L-lysine biosynthesis via DAP pathway; (S)-tetrahydrodipicolinate from L-aspartate: step 4/4. Catalyzes the conversion of 4-hydroxy-tetrahydrodipicolinate (HTPA) to tetrahydrodipicolinate. This chain is 4-hydroxy-tetrahydrodipicolinate reductase, found in Haemophilus influenzae (strain PittGG).